Reading from the N-terminus, the 171-residue chain is uncharacterized protein (171 aa).

Residues 5–25 form a helical membrane-spanning segment; sequence FLLTIFALWVGGFGYYLYLIN.

The protein localises to the membrane. This is an uncharacterized protein from Rickettsia conorii (strain ATCC VR-613 / Malish 7).